A 308-amino-acid polypeptide reads, in one-letter code: Olfactory receptor 13H1 (308 aa).

The Extracellular segment spans residues 1-25 (MAMDNVTAVFQFLLIGISNYPQWRD). A glycan (N-linked (GlcNAc...) asparagine) is linked at N5. Residues 26–46 (TFFTLVLIIYLSTLLGNGFMI) form a helical membrane-spanning segment. At 47–54 (FLIHFDPN) the chain is on the cytoplasmic side. The helical transmembrane segment at 55–75 (LHTPIYFFLSNLSFLDLCYGT) threads the bilayer. Topologically, residues 76-99 (ASMPQALVHCFSTHPYLSYPRCLA) are extracellular. A disulfide bridge connects residues C97 and C188. Residues 100–120 (QTSVSLALATAECLLLAAMAY) form a helical membrane-spanning segment. The Cytoplasmic segment spans residues 121-139 (DRVVAISNPLRYSVVMNGP). A helical membrane pass occupies residues 140 to 159 (VCVCLVATSWGTSLVLTAML). The Extracellular segment spans residues 160 to 196 (ILSLRLHFCGANVINHFACEILSLIKLTCSDTSLNEF). The helical transmembrane segment at 197-216 (MILITSIFTLLLPFGFVLLS) threads the bilayer. Over 217-236 (YIRIAMAIIRIRSLQGRLKA) the chain is Cytoplasmic. Residues 237–257 (FTTCGSHLTVVTIFYGSAISM) form a helical membrane-spanning segment. The Extracellular portion of the chain corresponds to 258 to 270 (YMKTQSKSYPDQD). The chain crosses the membrane as a helical span at residues 271-291 (KFISVFYGALTPMLNPLIYSL). The Cytoplasmic portion of the chain corresponds to 292 to 308 (RKKDVKRAIRKVMLKRT).

It belongs to the G-protein coupled receptor 1 family.

The protein resides in the cell membrane. In terms of biological role, odorant receptor. The chain is Olfactory receptor 13H1 (OR13H1) from Homo sapiens (Human).